The sequence spans 1157 residues: DNA-directed RNA polymerase subunit beta (1157 aa).

This sequence belongs to the RNA polymerase beta chain family. As to quaternary structure, the RNAP catalytic core consists of 2 alpha, 1 beta, 1 beta' and 1 omega subunit. When a sigma factor is associated with the core the holoenzyme is formed, which can initiate transcription.

The enzyme catalyses RNA(n) + a ribonucleoside 5'-triphosphate = RNA(n+1) + diphosphate. Functionally, DNA-dependent RNA polymerase catalyzes the transcription of DNA into RNA using the four ribonucleoside triphosphates as substrates. This chain is DNA-directed RNA polymerase subunit beta, found in Tropheryma whipplei (strain Twist) (Whipple's bacillus).